The following is a 404-amino-acid chain: Cytochrome b561 and DOMON domain-containing protein At2g04850 (404 aa).

A signal peptide spans 1–22 (MATLILSFLLLLLATKLPESLA). Residues 43 to 173 (QQASIAWTYH…TKIHHVWNRG (131 aa)) enclose the DOMON domain. The region spanning 180 to 380 (SPTIHPTTST…MEVNSWVVFC (201 aa)) is the Cytochrome b561 domain. The chain crosses the membrane as a helical span at residues 217–237 (VTHGVVNAISWGFLLPAGAVT). The heme b site is built by His219 and His255. Residues 256–276 (AAIQLTGFLLGTIGFSIGIVL) form a helical membrane-spanning segment. His288 provides a ligand contact to heme b. A helical membrane pass occupies residues 290–310 (SLGIATFTAAALQTLALLFRP). Heme b is bound at residue His324. 2 consecutive transmembrane segments (helical) span residues 326-346 (FVGY…FEVL) and 359-379 (LCLS…WVVF).

Heme b serves as cofactor.

The protein localises to the membrane. Its function is as follows. May act as a catecholamine-responsive trans-membrane electron transporter. This Arabidopsis thaliana (Mouse-ear cress) protein is Cytochrome b561 and DOMON domain-containing protein At2g04850.